Consider the following 971-residue polypeptide: Putative helicase 184R (971 aa).

A disordered region spans residues glycine 506–lysine 528. The region spanning proline 624 to leucine 807 is the SF3 helicase domain. Residue glycine 668–serine 675 participates in ATP binding.

Belongs to the IIV-6 184R family.

In Acheta domesticus (House cricket), this protein is Putative helicase 184R.